The sequence spans 248 residues: Ubiquinone/menaquinone biosynthesis C-methyltransferase UbiE (248 aa).

Residues serine 68 and aspartate 92 each coordinate S-adenosyl-L-methionine.

Belongs to the class I-like SAM-binding methyltransferase superfamily. MenG/UbiE family.

The enzyme catalyses a 2-demethylmenaquinol + S-adenosyl-L-methionine = a menaquinol + S-adenosyl-L-homocysteine + H(+). It catalyses the reaction a 2-methoxy-6-(all-trans-polyprenyl)benzene-1,4-diol + S-adenosyl-L-methionine = a 5-methoxy-2-methyl-3-(all-trans-polyprenyl)benzene-1,4-diol + S-adenosyl-L-homocysteine + H(+). Its pathway is quinol/quinone metabolism; menaquinone biosynthesis; menaquinol from 1,4-dihydroxy-2-naphthoate: step 2/2. The protein operates within cofactor biosynthesis; ubiquinone biosynthesis. Methyltransferase required for the conversion of demethylmenaquinol (DMKH2) to menaquinol (MKH2) and the conversion of 2-polyprenyl-6-methoxy-1,4-benzoquinol (DDMQH2) to 2-polyprenyl-3-methyl-6-methoxy-1,4-benzoquinol (DMQH2). The protein is Ubiquinone/menaquinone biosynthesis C-methyltransferase UbiE of Rickettsia africae (strain ESF-5).